The primary structure comprises 137 residues: uncharacterized protein (137 aa).

The disordered stretch occupies residues 31-83 (PASPINDKEKDKAGGRLPSGSEPRARAFCEAGADGEQGDPSPADTIKANQGHI).

This is an uncharacterized protein from Homo sapiens (Human).